A 183-amino-acid polypeptide reads, in one-letter code: MSSHSQEPVGEENFDDSEYDRPSKSQVKREMHALLDLGKELVELSPERLRQLPLEERLYEAIREAQRTTGREGRRRQIHFVGKLMRSAPAEAIRAQLDTWRNGSREETAAMHRLEALRERLLKDDDALTAVLQRNPDADIQHLRALIRAARKEAAANAALSQGQEPQRKQYRALFQALKNLSA.

The disordered stretch occupies residues 1-27; it reads MSSHSQEPVGEENFDDSEYDRPSKSQV. The span at 9–18 shows a compositional bias: acidic residues; the sequence is VGEENFDDSE.

The protein belongs to the DarP family.

It is found in the cytoplasm. In terms of biological role, member of a network of 50S ribosomal subunit biogenesis factors which assembles along the 30S-50S interface, preventing incorrect 23S rRNA structures from forming. Promotes peptidyl transferase center (PTC) maturation. The polypeptide is Dual-action ribosomal maturation protein DarP (Bordetella parapertussis (strain 12822 / ATCC BAA-587 / NCTC 13253)).